The sequence spans 286 residues: Aminoglycoside N(3)-acetyltransferase III (286 aa).

This sequence belongs to the antibiotic N-acetyltransferase family.

The enzyme catalyses a 2-deoxystreptamine antibiotic + acetyl-CoA = an N(3)-acetyl-2-deoxystreptamine antibiotic + CoA + H(+). Functionally, resistance to antibiotics containing the 2-deoxy-streptamine ring including gentamicin, kanamycin, tobramycin, neomycin and apramycin. The polypeptide is Aminoglycoside N(3)-acetyltransferase III (aacC3) (Salmonella sp).